The sequence spans 96 residues: Small ubiquitin-related modifier 2 (96 aa).

K11 participates in a covalent cross-link: Glycyl lysine isopeptide (Lys-Gly) (interchain with G-Cter in SUMO). Residues 16–96 (DHINLKVAGQ…FQQQTGGHRI (81 aa)) form the Ubiquitin-like domain. G93 participates in a covalent cross-link: Glycyl lysine isopeptide (Gly-Lys) (interchain with K-? in acceptor proteins). A propeptide spanning residues 94–96 (HRI) is cleaved from the precursor.

This sequence belongs to the ubiquitin family. SUMO subfamily. In terms of assembly, interacts with sae2 and ube2i. Covalently attached to a number of proteins. Post-translationally, polymeric chains can be formed through Lys-11 cross-linking. Cleavage of precursor form by a sentrin-specific protease is necessary for function.

It localises to the nucleus. Functionally, ubiquitin-like protein that can be covalently attached to proteins as a monomer or as a lysine-linked polymer. Covalent attachment via an isopeptide bond to its substrates requires prior activation by the E1 complex sae1-sae2 and linkage to the E2 enzyme ube2i, and can be promoted by an E3 ligase such as pias1-4. This post-translational modification on lysine residues of proteins plays a crucial role in a number of cellular processes such as nuclear transport, DNA replication and repair, mitosis and signal transduction. Polymeric sumo2 chains are also susceptible to polyubiquitination which functions as a signal for proteasomal degradation of modified proteins. This Danio rerio (Zebrafish) protein is Small ubiquitin-related modifier 2.